Here is a 461-residue protein sequence, read N- to C-terminus: Photosystem II CP43 reaction center protein (461 aa).

Residues 1–48 are Cytoplasmic-facing; sequence MVTLSSNSIFATNRDQESSGFAWWAGNARLINLSGKLLGAHVAHAGLI. A helical membrane pass occupies residues 49–71; the sequence is VFWAGAMTLFELAHFIPEKPMYE. Topologically, residues 72–111 are lumenal; the sequence is QGLILIPHIATLGWGVGPGGEVVDTFPFFVVGVVHLISSA. Residues 112–133 traverse the membrane as a helical segment; that stretch reads VLGFGGVYHAIRGPETLEEYSS. Residues 134–155 are Cytoplasmic-facing; it reads FFGYDWKDKNKMTTILGFHLIV. A helical membrane pass occupies residues 156 to 178; it reads LGIGALLLVAKAMFFGGLYDTWA. Residues 179-232 are Lumenal-facing; it reads PGGGDVRVITNPTLDPRVIFGYLLKSPFGGEGWIVSVNNLEDVVGGHIWIGLIC. A helical membrane pass occupies residues 233 to 253; sequence IAGGIWHILTTPFGWARRAFI. Topologically, residues 254–268 are cytoplasmic; sequence WSGEAYLSYSLGALS. The helical transmembrane segment at 269–289 threads the bilayer; the sequence is MMGFIATCFVWFNNTVYPSEF. The Lumenal portion of the chain corresponds to 290–424; sequence YGPTGPEASQ…ATSHFVLAFF (135 aa). Residue E355 coordinates [CaMn4O5] cluster. The chain crosses the membrane as a helical span at residues 425 to 449; it reads FLVGHLWHAGRARAAAAGFEKGIDR. The Cytoplasmic segment spans residues 450-461; it reads ESEPVLSMPSLD.

PSII is composed of 1 copy each of membrane proteins PsbA, PsbB, PsbC, PsbD, PsbE, PsbF, PsbH, PsbI, PsbJ, PsbK, PsbL, PsbM, PsbT, PsbX, PsbY, PsbZ, Psb30/Ycf12, peripheral proteins PsbO, CyanoQ (PsbQ), PsbU, PsbV and a large number of cofactors. It forms dimeric complexes. Part of a photosystem II (PSII) assembly intermediate complex PSII-I; crystallized from a strain deleted of psbJ, it forms monomeric PSII before addition of the oxygen evolving complex. PSII-I includes 3 assembly factors not found in mature PSII (Psb27, Psb28 and Psb34), and CP43 (this protein) is not in its mature conformation. Binds multiple chlorophylls and provides some of the ligands for the Ca-4Mn-5O cluster of the oxygen-evolving complex. It may also provide a ligand for a Cl- that is required for oxygen evolution. PSII binds additional chlorophylls, carotenoids and specific lipids. is required as a cofactor.

The protein resides in the cellular thylakoid membrane. One of the components of the core complex of photosystem II (PSII). It binds chlorophyll and helps catalyze the primary light-induced photochemical processes of PSII. PSII is a light-driven water:plastoquinone oxidoreductase, using light energy to abstract electrons from H(2)O, generating O(2) and a proton gradient subsequently used for ATP formation. This chain is Photosystem II CP43 reaction center protein, found in Thermosynechococcus vestitus (strain NIES-2133 / IAM M-273 / BP-1).